A 107-amino-acid chain; its full sequence is MKRYQFTDADSSWQLDEIYIRVNGKWFYLYRAINKHGTTLDFYFSPKRNKNTAYPFIKRVLKTYSVERQPKILNTDKHSSYGYAITRLMKEGKDTRCCKAAASQIPE.

This is an uncharacterized protein from Yersinia pseudotuberculosis serotype I (strain IP32953).